The primary structure comprises 617 residues: Vacuolar protein sorting-associated protein 33B (617 aa).

It belongs to the STXBP/unc-18/SEC1 family. Probable core component of the class C core vacuole/endosome tethering (CORVET) complex. The common core is composed of the class C Vps proteins vps-11, vps-16 and vps-18, and which further associates with vps-8 and vps-33.2. Interacts with spe-39. Broadly expressed in somatic tissues including the pharynx, intestine, spermatheca, and in coelomocytes. Expressed in the lining of the gut lumen.

The protein resides in the early endosome. Its subcellular location is the late endosome membrane. The protein localises to the lysosome membrane. It localises to the cytoplasmic vesicle. It is found in the clathrin-coated vesicle. The protein resides in the recycling endosome. Functionally, plays a role in vesicle-mediated protein trafficking to lysosomal compartments and in membrane docking/fusion reactions of late endosomes/lysosomes. Believed to act as a component of the putative CORVET endosomal tethering complex which is proposed to be involved in the rab-5-to-rab-7 endosome conversion probably implicating sand-1, and via binding SNAREs and SNARE complexes to mediate tethering and docking events during SNARE-mediated membrane fusion. The CORVET complex is proposed to function as a rab-5 effector to mediate early endosome fusion probably in specific endosome subpopulations. Most likely within the CORVET complex, it is involved in the fusion of endocytic compartments. Required for sperm development and function. In Caenorhabditis elegans, this protein is Vacuolar protein sorting-associated protein 33B.